Consider the following 470-residue polypeptide: Histidine--tRNA ligase (470 aa).

This sequence belongs to the class-II aminoacyl-tRNA synthetase family. Homodimer.

It localises to the cytoplasm. The enzyme catalyses tRNA(His) + L-histidine + ATP = L-histidyl-tRNA(His) + AMP + diphosphate + H(+). This is Histidine--tRNA ligase from Xanthomonas oryzae pv. oryzae (strain PXO99A).